Here is a 301-residue protein sequence, read N- to C-terminus: MADNSSDEYEEDNKEKKKPSQLTPQQGFSENDDDDDDDSSETDSDDDDDDEEHGAPLEGAYDPADYEHLPVSAEIKELFEYISRYTPQLIDLDHKLKPFIPDFIPAVGDIDAFLKVPRPDGKPDHLGLLVLDEPSTKQSDPTVLSLWLTENSKQHNITQHMKVKSLEDAEKNPKAIDTWIESISELHRSKPPATVHYTRPMPDIDTLMQEWSPEFEELLGKVSLPTVEIDCSLAEYIDMICAILDIPFYKSRIQSLHLLFSLYSEFKNSQHFKALAEGKKTFTPPSNSASQAGDAETLSFL.

Acidic residues-rich tracts occupy residues 1-12 (MADNSSDEYEED) and 30-52 (ENDD…DDEE). The disordered stretch occupies residues 1–66 (MADNSSDEYE…LEGAYDPADY (66 aa)). Position 283 is a phosphothreonine (threonine 283).

The protein belongs to the IFT46 family. As to quaternary structure, component of the IFT complex B, at least composed of IFT20, IFT22, IFT25, IFT27, IFT46, IFT52, TRAF3IP1/IFT54, IFT57, IFT74, IFT80, IFT81, and IFT88. Interacts with IFT57, IFT88 and DAW1. Interacts with ARL13B. Interacts with IFT56. Interacts with TTC25. Interacts with IFT70B.

Its subcellular location is the cytoplasm. The protein resides in the cytoskeleton. It localises to the cilium basal body. It is found in the cell projection. The protein localises to the cilium. Forms part of a complex involved in intraflagellar transport (IFT), the bi-directional movement of particles required for the assembly, maintenance and functioning of primary cilia. May play a role in chondrocyte maturation and skeletogenesis. In Rattus norvegicus (Rat), this protein is Intraflagellar transport protein 46 homolog (Ift46).